We begin with the raw amino-acid sequence, 555 residues long: Glypican-6 (555 aa).

Positions 1-23 (MPSWIRAVILPLSGLLLTLPAAA) are cleaved as a signal peptide. Positions 348 to 357 (PALRSARSAP) are enriched in low complexity. 2 disordered regions span residues 348–376 (PALR…PTTA) and 480–501 (GNDV…GSGC). A lipid anchor (GPI-anchor amidated serine) is attached at Ser-530. Residues 531–555 (ASKFSSSLISWSLVCMVLALQRLYR) constitute a propeptide, removed in mature form.

This sequence belongs to the glypican family. In terms of tissue distribution, in the cartilage growth-plate, gradient of expression with highest levels from the proliferative and pre-hypertrophic zones to lowest, if any, in the hypertrophic zones (at protein level).

It is found in the cell membrane. The protein localises to the secreted. It localises to the extracellular space. Its function is as follows. Cell surface proteoglycan that bears heparan sulfate. Putative cell surface coreceptor for growth factors, extracellular matrix proteins, proteases and anti-proteases. Enhances migration and invasion of cancer cells through WNT5A signaling. The protein is Glypican-6 (Gpc6) of Mus musculus (Mouse).